A 278-amino-acid polypeptide reads, in one-letter code: MTRVSSVSASCTTTNPPKNTREDMSRVGAHLTIQNDFRHLIMQITEKIFTKSSLGSMKFEELKIIHMGCQTVFMRGILTLLTRECFWNTGNDDIRILNRNIPTSYWLEIHTLLEKFIPTTDPWIFSDVYAENTLQYLQKQNACVRLYQEYMLSKLGLYVPLPDFLREDVNILFHLGTVTQHRLFKTFMIFQKYWGIDSYEPIVRTIVRKTWFFFLILWGQLRVDSNVFCEQDFGHEAGILSYLQSDYLSFMGIGQIDISINKSSFPDVFSITDIKPLM.

Positions 1–18 are enriched in polar residues; it reads MTRVSSVSASCTTTNPPK. The tract at residues 1-25 is disordered; sequence MTRVSSVSASCTTTNPPKNTREDMS.

The protein belongs to the herpesviridae UL79 family.

The sequence is that of Protein U52 from Elephas maximus (Indian elephant).